Here is a 204-residue protein sequence, read N- to C-terminus: Molybdenum cofactor guanylyltransferase (204 aa).

Residues 12 to 14 (LAG), Lys25, Asn53, Asp71, and Asp101 each bind GTP. Asp101 lines the Mg(2+) pocket.

The protein belongs to the MobA family. As to quaternary structure, monomer. Mg(2+) is required as a cofactor.

The protein localises to the cytoplasm. It carries out the reaction Mo-molybdopterin + GTP + H(+) = Mo-molybdopterin guanine dinucleotide + diphosphate. Transfers a GMP moiety from GTP to Mo-molybdopterin (Mo-MPT) cofactor (Moco or molybdenum cofactor) to form Mo-molybdopterin guanine dinucleotide (Mo-MGD) cofactor. The polypeptide is Molybdenum cofactor guanylyltransferase (Ralstonia pickettii (strain 12J)).